We begin with the raw amino-acid sequence, 811 residues long: E3 ubiquitin-protein ligase RNF10 (811 aa).

The segment covering 1–10 (MPLSSPNAAA) has biased composition (polar residues). The segment at 1 to 119 (MPLSSPNAAA…SFNGGRRDEV (119 aa)) is disordered. Residue S5 is modified to Phosphoserine. 3 stretches are compositionally biased toward low complexity: residues 18 to 31 (NSGSNSSSASSGSS), 78 to 90 (NNQSRRSSSQKSK), and 104 to 113 (SKLFSSSFNG). Residues 101–185 (GGSSKLFSSS…FNKELFLQAN (85 aa)) form an interaction with MEOX2 region. Residues S110 and S128 each carry the phosphoserine modification. An RING-type zinc finger spans residues 225–267 (CPICLYPPTAAKITRCGHIFCWACILHYLSLSEKTWSKCPICY). Polar residues predominate over residues 653–662 (DSALGPTSTE). Disordered regions lie at residues 653 to 672 (DSALGPTSTEGHGALSISPL), 724 to 761 (DVWPKTAPKKDENSLVPPAPVDSDGESDNSDRVPVPSF), and 776 to 811 (LDTPATSDPLSEEKGGKKRKKQKQKLLFSTSVVHTK). The span at 724–736 (DVWPKTAPKKDEN) shows a compositional bias: basic and acidic residues. Residues 802-811 (LFSTSVVHTK) show a composition bias toward polar residues.

This sequence belongs to the RNF10 family. Interacts with MEOX2.

The protein resides in the cytoplasm. It localises to the nucleus. It carries out the reaction S-ubiquitinyl-[E2 ubiquitin-conjugating enzyme]-L-cysteine + [acceptor protein]-L-lysine = [E2 ubiquitin-conjugating enzyme]-L-cysteine + N(6)-ubiquitinyl-[acceptor protein]-L-lysine.. It functions in the pathway protein modification; protein ubiquitination. In terms of biological role, E3 ubiquitin-protein ligase that catalyzes monoubiquitination of 40S ribosomal proteins RPS2/us5 and RPS3/us3 in response to ribosome stalling. Part of a ribosome quality control that takes place when ribosomes have stalled during translation initiation (iRQC): RNF10 acts by mediating monoubiquitination of RPS2/us5 and RPS3/us3, promoting their degradation by the proteasome. Also promotes ubiquitination of 40S ribosomal proteins in response to ribosome stalling during translation elongation. The action of RNF10 in iRQC is counteracted by USP10. May also act as a transcriptional factor involved in the regulation of MAG (Myelin-associated glycoprotein) expression. Acts as a regulator of Schwann cell differentiation and myelination. The chain is E3 ubiquitin-protein ligase RNF10 from Homo sapiens (Human).